The primary structure comprises 83 residues: MKTLLLTLVVVTIVCLDFGHTLICYNYETPLDKTTECCGNGVTTCFAKSWRDHRGLRTDRGCGCPNVKPGVTINCCKTDRCNG.

An N-terminal signal peptide occupies residues 1–21; that stretch reads MKTLLLTLVVVTIVCLDFGHT. 4 disulfide bridges follow: C24–C45, C38–C62, C64–C75, and C76–C81.

This sequence belongs to the three-finger toxin family. Short-chain subfamily. Type I alpha-neurotoxin sub-subfamily. Dimer. In terms of tissue distribution, expressed by the venom gland.

It is found in the secreted. Its function is as follows. Binds to muscle nicotinic acetylcholine receptor (nAChR) and inhibit acetylcholine from binding to the receptor, thereby impairing neuromuscular transmission. This Micrurus altirostris (Uruguayan coral snake) protein is Three-finger toxin MALT0066C.